A 555-amino-acid polypeptide reads, in one-letter code: 2-isopropylmalate synthase (555 aa).

One can recognise a Pyruvate carboxyltransferase domain in the interval 30 to 303 (PIWCSVDLRD…DPGLDCTDIN (274 aa)). 4 residues coordinate Mg(2+): Asp39, His242, His244, and Asn278. The segment at 437 to 555 (QPDARIKFVD…VSAANRVIAK (119 aa)) is regulatory domain.

It belongs to the alpha-IPM synthase/homocitrate synthase family. LeuA type 2 subfamily. Homodimer. It depends on Mg(2+) as a cofactor.

The protein resides in the cytoplasm. It catalyses the reaction 3-methyl-2-oxobutanoate + acetyl-CoA + H2O = (2S)-2-isopropylmalate + CoA + H(+). Its pathway is amino-acid biosynthesis; L-leucine biosynthesis; L-leucine from 3-methyl-2-oxobutanoate: step 1/4. Functionally, catalyzes the condensation of the acetyl group of acetyl-CoA with 3-methyl-2-oxobutanoate (2-ketoisovalerate) to form 3-carboxy-3-hydroxy-4-methylpentanoate (2-isopropylmalate). In Brucella suis biovar 1 (strain 1330), this protein is 2-isopropylmalate synthase.